The following is a 140-amino-acid chain: Large-conductance mechanosensitive channel 3 (140 aa).

A run of 3 helical transmembrane segments spans residues 8–28, 30–50, and 81–101; these read FISKGNVMDLAVGVIIGAAFG, IVTSLVDDVIMPIFGAIFGGL, and GSFITAVLNFLILAFIIFLMV.

This sequence belongs to the MscL family. Homopentamer.

It localises to the cell inner membrane. Functionally, channel that opens in response to stretch forces in the membrane lipid bilayer. May participate in the regulation of osmotic pressure changes within the cell. The sequence is that of Large-conductance mechanosensitive channel 3 from Mesorhizobium japonicum (strain LMG 29417 / CECT 9101 / MAFF 303099) (Mesorhizobium loti (strain MAFF 303099)).